Here is a 92-residue protein sequence, read N- to C-terminus: Small ribosomal subunit protein uS19 (92 aa).

The protein belongs to the universal ribosomal protein uS19 family.

Its function is as follows. Protein S19 forms a complex with S13 that binds strongly to the 16S ribosomal RNA. The sequence is that of Small ribosomal subunit protein uS19 from Parvibaculum lavamentivorans (strain DS-1 / DSM 13023 / NCIMB 13966).